The sequence spans 453 residues: uncharacterized protein (453 aa).

To yeast RIT1.

This is an uncharacterized protein from Schizosaccharomyces pombe (strain 972 / ATCC 24843) (Fission yeast).